The following is a 129-amino-acid chain: GEL complex subunit OPTI (129 aa).

Residues 1–44 (MSGGRRKEEPPQPQLANGALKVSVWSKVLRSDAAWDDKDEFLDV) lie on the Cytoplasmic side of the membrane. A helical transmembrane segment spans residues 45–65 (IYWFRQIIALVLGVIWGVLPL). Residue arginine 66 is a topological domain, lumenal. Residues 67–84 (GFLGIAGFCLINAGVLYL) traverse the membrane as a helical segment. Over 85–103 (YFSNYLQIDEEEYGGTWEL) the chain is Cytoplasmic. A helical transmembrane segment spans residues 104-127 (TKEGFMTSFALFMVIWIIFYTAIH). Over 128–129 (YD) the chain is Lumenal.

Belongs to the EMC6 family. Component of the GET- and EMC-like (GEL) complex, composed of RAB5IF/OPTI and TMCO1. The GEL complex is part of the multi-pass translocon (MPT) complex, composed of three subcomplexes, the GEL complex (composed of RAB5IF/OPTI and TMCO1), the BOS complex (composed of NCLN/Nicalin, NOMO1 and TMEM147) and the PAT complex (composed of WDR83OS/Asterix and CCDC47). The MPT complex associates with the SEC61 complex. Interacts with NDUFS3, NDUFA4, NDUFV1, NDUFA9 and NDUFS8 of the mitochondrial membrane respiratory chain NADH dehydrogenase (Complex I). Interacts with UQCRC2 of the ubiquinol-cytochrome c reductase complex (Complex III). Interacts with COX5A and COX7C of the cytochrome c oxidase complex (Complex IV). In terms of tissue distribution, expressed in neuronal cells.

Its subcellular location is the endoplasmic reticulum membrane. It is found in the mitochondrion inner membrane. Its function is as follows. Component of the multi-pass translocon (MPT) complex that mediates insertion of multi-pass membrane proteins into the lipid bilayer of membranes. The MPT complex takes over after the SEC61 complex: following membrane insertion of the first few transmembrane segments of proteins by the SEC61 complex, the MPT complex occludes the lateral gate of the SEC61 complex to promote insertion of subsequent transmembrane regions. Within the MPT complex, the GEL subcomplex may mediate insertion of transmembrane regions into the membrane. In addition to its role in multi-pass membrane insertion, RAB5IF/OPTI also acts as an assembly factor for mitochondrial respiratory complexes. This Mus musculus (Mouse) protein is GEL complex subunit OPTI.